Consider the following 199-residue polypeptide: Probable nicotinate-nucleotide adenylyltransferase (199 aa).

It belongs to the NadD family.

The catalysed reaction is nicotinate beta-D-ribonucleotide + ATP + H(+) = deamido-NAD(+) + diphosphate. It participates in cofactor biosynthesis; NAD(+) biosynthesis; deamido-NAD(+) from nicotinate D-ribonucleotide: step 1/1. In terms of biological role, catalyzes the reversible adenylation of nicotinate mononucleotide (NaMN) to nicotinic acid adenine dinucleotide (NaAD). This is Probable nicotinate-nucleotide adenylyltransferase from Roseiflexus castenholzii (strain DSM 13941 / HLO8).